Consider the following 227-residue polypeptide: Cytidylate kinase (227 aa).

Position 7 to 15 (7 to 15 (GPSGAGKGT)) interacts with ATP.

It belongs to the cytidylate kinase family. Type 1 subfamily.

It is found in the cytoplasm. The enzyme catalyses CMP + ATP = CDP + ADP. It catalyses the reaction dCMP + ATP = dCDP + ADP. The polypeptide is Cytidylate kinase (Actinobacillus succinogenes (strain ATCC 55618 / DSM 22257 / CCUG 43843 / 130Z)).